The primary structure comprises 485 residues: Zinc finger protein 639 (485 aa).

A compositionally biased stretch (basic residues) spans Met-1 to His-14. The tract at residues Met-1–Asp-20 is disordered. Position 60 is a phosphoserine (Ser-60). Lys-76 is covalently cross-linked (Glycyl lysine isopeptide (Lys-Gly) (interchain with G-Cter in SUMO2)). Ser-88 carries the post-translational modification Phosphoserine. Residues Lys-177, Lys-181, and Lys-226 each participate in a glycyl lysine isopeptide (Lys-Gly) (interchain with G-Cter in SUMO2) cross-link. 8 C2H2-type zinc fingers span residues Tyr-204–His-227, Asn-233–His-255, Tyr-260–His-283, Tyr-289–His-311, Phe-374–His-397, His-403–His-425, Tyr-431–His-454, and His-460–His-482. An interaction with CTNNA2 region spans residues Lys-371 to Ser-455.

The protein belongs to the krueppel C2H2-type zinc-finger protein family. In terms of assembly, interacts with CTNNA2.

It localises to the nucleus. In terms of biological role, binds DNA and may function as a transcriptional repressor. The protein is Zinc finger protein 639 (ZNF639) of Bos taurus (Bovine).